Consider the following 284-residue polypeptide: Pantothenate synthetase (284 aa).

30 to 37 (MGFLHEGH) is an ATP binding site. His37 acts as the Proton donor in catalysis. Gln61 provides a ligand contact to (R)-pantoate. Position 61 (Gln61) interacts with beta-alanine. An ATP-binding site is contributed by 147–150 (GRKD). Gln153 serves as a coordination point for (R)-pantoate. ATP is bound by residues Val176 and 184–187 (MSSR).

Belongs to the pantothenate synthetase family. As to quaternary structure, homodimer.

The protein localises to the cytoplasm. The enzyme catalyses (R)-pantoate + beta-alanine + ATP = (R)-pantothenate + AMP + diphosphate + H(+). The protein operates within cofactor biosynthesis; (R)-pantothenate biosynthesis; (R)-pantothenate from (R)-pantoate and beta-alanine: step 1/1. In terms of biological role, catalyzes the condensation of pantoate with beta-alanine in an ATP-dependent reaction via a pantoyl-adenylate intermediate. The polypeptide is Pantothenate synthetase (Pelobacter propionicus (strain DSM 2379 / NBRC 103807 / OttBd1)).